A 62-amino-acid polypeptide reads, in one-letter code: Photosystem II reaction center protein Z (62 aa).

2 helical membrane-spanning segments follow: residues 8–28 (FLIALVLFSLLMVIGVPVAYA) and 41–61 (YVGSAIWAILVVAVAILNFLV).

This sequence belongs to the PsbZ family. PSII is composed of 1 copy each of membrane proteins PsbA, PsbB, PsbC, PsbD, PsbE, PsbF, PsbH, PsbI, PsbJ, PsbK, PsbL, PsbM, PsbT, PsbX, PsbY, PsbZ, Psb30/Ycf12, peripheral proteins PsbO, CyanoQ (PsbQ), PsbU, PsbV and a large number of cofactors. It forms dimeric complexes.

Its subcellular location is the cellular thylakoid membrane. Its function is as follows. May control the interaction of photosystem II (PSII) cores with the light-harvesting antenna, regulates electron flow through the 2 photosystem reaction centers. PSII is a light-driven water plastoquinone oxidoreductase, using light energy to abstract electrons from H(2)O, generating a proton gradient subsequently used for ATP formation. The polypeptide is Photosystem II reaction center protein Z (Microcystis aeruginosa (strain NIES-843 / IAM M-2473)).